The sequence spans 401 residues: Phosphoglycerate kinase (401 aa).

Substrate is bound by residues 21–23 (DLN), Arg36, 59–62 (HQGR), Arg116, and Arg156. Residues Glu331 and 357-360 (GGDT) each bind ATP.

The protein belongs to the phosphoglycerate kinase family.

The protein localises to the cytoplasm. The enzyme catalyses (2R)-3-phosphoglycerate + ATP = (2R)-3-phospho-glyceroyl phosphate + ADP. Its pathway is carbohydrate degradation; glycolysis; pyruvate from D-glyceraldehyde 3-phosphate: step 2/5. The polypeptide is Phosphoglycerate kinase (pgk) (Haloarcula vallismortis (Halobacterium vallismortis)).